Consider the following 601-residue polypeptide: FAD-binding monooxygenase stcW (601 aa).

Residues 42 to 43 (FS), glutamate 64, tryptophan 73, aspartate 84, tyrosine 90, and valine 133 contribute to the FAD site.

The protein belongs to the FAD-binding monooxygenase family. Requires FAD as cofactor.

It functions in the pathway mycotoxin biosynthesis; sterigmatocystin biosynthesis. FAD-binding monooxygenase; part of the gene cluster that mediates the biosynthesis of sterigmatocystin (ST), a polyketide-derived furanocoumarin which is part of the most toxic and carcinogenic compounds among the known mycotoxins. The first step in the biosynthesis of sterigmatocystin is the production of hexanoate by the fatty acid synthase (FAS) units stcJ and stcK. The polyketide backbone is assembled by the non-reducing polyketide synthase stcA by condensation of the starter hexanoyl-CoA and 7 malonyl-CoA extender units followed by cyclization and release of norsolorinic acid. Norsolorinic acid is the first stable intermediate in the biosynthesis of sterigmatocystin and is converted into averantin (AVN) by the ketoreductase stcE which reduces the hexanoate ketone to an alcohol. Averantin is then oxidized into 5'-hydroxyaverantin (HAVN) by the cytochrome P450 monooxygenase stcF. 5'-hydroxyaverantin is further converted to 5'-oxyaverantin (OAVN) by the 5'-hydroxyaverantin dehydrogenase stcG. The next step is the conversion of OAVN into averufin (AVF) which is catalyzed by a yet to be identified enzyme. The cytochrome P450 monooxygenase stcB and the flavin-binding monooxygenase stcW are both required for the conversion of averufin to 1-hydroxyversicolorone. The esterase stcI probably catalyzes the formation of versiconal hemiacetal acetate from 1-hydroxyversicolorone. The oxydoreductase stcN then probably catalyzes the biosynthetic step from versiconal to versicolorin B (VERB). The next step is performed by the versicolorin B desaturase stcL to produce versicolorin A (VERA). The ketoreductase stcU and the cytochrome P450 monooxygenase stcS are involved in the conversion of versicolorin A to demethylsterigmatocystin. The Baeyer-Villiger oxidas stcQ and the reductase stcR might be involved in the biosynthetic step from versicolorin A to demethylsterigmatocystin. The final step in the biosynthesis of sterigmatocystin is the methylation of demethylsterigmatocystin catalyzed by the methyltransferase stcP. In Emericella nidulans (strain FGSC A4 / ATCC 38163 / CBS 112.46 / NRRL 194 / M139) (Aspergillus nidulans), this protein is FAD-binding monooxygenase stcW.